The primary structure comprises 805 residues: Angiotensin-converting enzyme 2 (805 aa).

A signal peptide spans Met-1–Ala-17. At Gln-18–Ser-740 the chain is on the extracellular side. A Peptidase M2 domain is found at Ser-19 to Ser-607. The interval Asp-30 to Tyr-41 is interaction with SARS-CoV spike glycoprotein. Asn-53 carries N-linked (GlcNAc...) asparagine glycosylation. The tract at residues Met-82 to Pro-84 is interaction with SARS-CoV spike glycoprotein. N-linked (GlcNAc...) asparagine glycans are attached at residues Asn-90 and Asn-103. Cysteines 133 and 141 form a disulfide. Residue Arg-169 coordinates chloride. Arg-273 serves as a coordination point for substrate. A glycan (N-linked (GlcNAc...) asparagine) is linked at Asn-322. Cys-344 and Cys-361 are oxidised to a cystine. Position 345–346 (His-345–Pro-346) interacts with substrate. Residues Lys-353 to Arg-357 form an interaction with SARS-CoV spike glycoprotein region. His-374 contributes to the Zn(2+) binding site. Glu-375 acts as the Proton acceptor in catalysis. Zn(2+)-binding residues include His-378 and Glu-402. An N-linked (GlcNAc...) asparagine glycan is attached at Asn-432. 2 residues coordinate chloride: Trp-477 and Lys-481. His-505 functions as the Proton donor in the catalytic mechanism. Tyr-515 is a binding site for substrate. An intrachain disulfide couples Cys-530 to Cys-542. Asn-546 carries an N-linked (GlcNAc...) asparagine glycan. One can recognise a Collectrin-like domain in the interval Ala-614 to Phe-805. Positions Arg-652–Lys-659 are essential for cleavage by ADAM17. The N-linked (GlcNAc...) asparagine glycan is linked to Asn-690. Positions Arg-697–Arg-716 are essential for cleavage by TMPRSS11D and TMPRSS2. A helical transmembrane segment spans residues Ile-741–Ile-761. Topologically, residues Phe-762–Phe-805 are cytoplasmic. Residues Asn-772 to Phe-805 form a disordered region. Positions Glu-778 to Ile-786 match the LIR motif. Tyr-781 carries the post-translational modification Phosphotyrosine. The Endocytic sorting signal motif lies at Tyr-781–Ile-784. An SH2-binding motif is present at residues Tyr-781–Asp-785. Ser-783 carries the post-translational modification Phosphoserine. Lys-788 is covalently cross-linked (Glycyl lysine isopeptide (Lys-Gly) (interchain with G-Cter in ubiquitin)). Over residues Gly-789–Phe-805 the composition is skewed to polar residues. The PTB motif lies at Asn-792 to Phe-795. Residues Thr-803–Phe-805 carry the PDZ-binding motif.

The protein belongs to the peptidase M2 family. As to quaternary structure, homodimer. Interacts with the catalytically active form of TMPRSS2. Interacts with SLC6A19; this interaction is essential for expression and function of SLC6A19 in intestine. Interacts with ITGA5:ITGB1. Probably interacts (via endocytic sorting signal motif) with AP2M1; the interaction is inhibited by phosphorylation of Tyr-781. Interacts (via PDZ-binding motif) with NHERF1 (via PDZ domains); the interaction may enhance ACE2 membrane residence. In terms of assembly, (Microbial infection) Interacts with SARS coronavirus/SARS-CoV spike protein. (Microbial infection) Interacts with SARS coronavirus-2/SARS-CoV-2 spike protein (via RBD domain). As to quaternary structure, (Microbial infection) Interacts with human coronavirus NL63 spike protein. In terms of assembly, (Microbial infection) Interacts with human coronavirus NL63/HCoV-NL63 spike glycoprotein. (Microbial infection) Interacts with SARS coronavirus-2/SARS-CoV-2 spike protein; the interaction is increased by AVP/Arg-vasopressin with which they may form a complex. Requires Zn(2+) as cofactor. It depends on chloride as a cofactor. Post-translationally, N-glycosylation on Asn-90 may limit SARS infectivity. In terms of processing, proteolytic cleavage by ADAM17 generates a secreted form. Also cleaved by serine proteases: TMPRSS2, TMPRSS11D and HPN/TMPRSS1. Phosphorylated. Phosphorylation at Tyr-781 probably inhibits interaction with AP2M1 and enables interactions with proteins containing SH2 domains. Post-translationally, ubiquitinated. Ubiquitinated on Lys-788 via 'Lys-48'-linked ubiquitin. 'Lys-48'-linked deubiquitinated by USP50 on the Lys-788; leading to its stabilization. In terms of tissue distribution, expressed in endothelial cells from small and large arteries, and in arterial smooth muscle cells (at protein level). Expressed in enterocytes of the small intestine, Leydig cells and Sertoli cells (at protein level). Expressed in the renal proximal tubule and the small intestine (at protein level). Expressed in heart, kidney, testis, and gastrointestinal system (at protein level). In lung, expressed at low levels in some alveolar type 2 cells, the expression seems to be individual-specific (at protein level). Expressed in nasal epithelial cells (at protein level). Coexpressed with TMPRSS2 within some lung alveolar type 2 cells, ileal absorptive enterocytes, intestinal epithelial cells, cornea, gallbladder and nasal goblet secretory cells. Coexpressed with TMPRSS4 within mature enterocytes. Expressed in nasal and bronchial epithelial cells (at protein level).

The protein resides in the secreted. It is found in the cell membrane. Its subcellular location is the cytoplasm. The protein localises to the cell projection. It localises to the cilium. The protein resides in the apical cell membrane. The enzyme catalyses angiotensin II + H2O = angiotensin-(1-7) + L-phenylalanine. It catalyses the reaction angiotensin I + H2O = angiotensin-(1-9) + L-leucine. The catalysed reaction is bradykinin(1-8) + H2O = bradykinin(1-7) + L-phenylalanine. It carries out the reaction neurotensin + H2O = neurotensin-(1-12) + L-leucine. The enzyme catalyses neurotensin-(1-8) + H2O = neurotensin-(1-7) + L-arginine. It catalyses the reaction kinetensin + H2O = kinetensin-(1-8) + L-leucine. The catalysed reaction is dynorphin A-(1-13) + H2O = dynorphin A-(1-12) + L-lysine. It carries out the reaction apelin-13 + H2O = apelin-12 + L-phenylalanine. The enzyme catalyses [Pyr1]apelin-13 + H2O = [Pyr1]apelin-12 + L-phenylalanine. It catalyses the reaction apelin-17 + H2O = apelin-16 + L-phenylalanine. The catalysed reaction is beta-casomorphin-7 + H2O = beta-casomorphin-6 + L-isoleucine. It carries out the reaction neocasomorphin + H2O = neocasomorphin-(1-5) + L-isoleucine. Its activity is regulated as follows. Regulated by chloride and fluoride, but not bromide. Chloride increases angiotensin I and decreases angiotensin II cleavage. Inhibited by MLN-4760, cFP_Leu, and EDTA, but not by the ACE inhibitors lisinopril, captopril and enalaprilat. Highly potent and selective in vitro ACE2 inhibitors were identified. Essential counter-regulatory carboxypeptidase of the renin-angiotensin hormone system that is a critical regulator of blood volume, systemic vascular resistance, and thus cardiovascular homeostasis. Converts angiotensin I to angiotensin 1-9, a nine-amino acid peptide with anti-hypertrophic effects in cardiomyocytes, and angiotensin II to angiotensin 1-7, which then acts as a beneficial vasodilator and anti-proliferation agent, counterbalancing the actions of the vasoconstrictor angiotensin II. Also removes the C-terminal residue from three other vasoactive peptides, neurotensin, kinetensin, and des-Arg bradykinin, but is not active on bradykinin. Also cleaves other biological peptides, such as apelins (apelin-13, [Pyr1]apelin-13, apelin-17, apelin-36), casomorphins (beta-casomorphin-7, neocasomorphin) and dynorphin A with high efficiency. In addition, ACE2 C-terminus is homologous to collectrin and is responsible for the trafficking of the neutral amino acid transporter SL6A19 to the plasma membrane of gut epithelial cells via direct interaction, regulating its expression on the cell surface and its catalytic activity. In terms of biological role, (Microbial infection) Acts as a receptor for human coronaviruses SARS-CoV and SARS-CoV-2, as well as human coronavirus NL63/HCoV-NL63. Functionally, non-functional as a carboxypeptidase. Its function is as follows. (Microbial infection) Non-functional as a receptor for human coronavirus SARS-CoV-2. This chain is Angiotensin-converting enzyme 2, found in Homo sapiens (Human).